Reading from the N-terminus, the 241-residue chain is Glucosamine-6-phosphate deaminase (241 aa).

Residue Asp-67 is the Proton acceptor; for enolization step of the active site. Asn-136 acts as the For ring-opening step in catalysis. His-138 functions as the Proton acceptor; for ring-opening step in the catalytic mechanism. Residue Glu-143 is the For ring-opening step of the active site.

The protein belongs to the glucosamine/galactosamine-6-phosphate isomerase family. NagB subfamily.

The catalysed reaction is alpha-D-glucosamine 6-phosphate + H2O = beta-D-fructose 6-phosphate + NH4(+). It functions in the pathway amino-sugar metabolism; N-acetylneuraminate degradation; D-fructose 6-phosphate from N-acetylneuraminate: step 5/5. Its function is as follows. Catalyzes the reversible isomerization-deamination of glucosamine 6-phosphate (GlcN6P) to form fructose 6-phosphate (Fru6P) and ammonium ion. The protein is Glucosamine-6-phosphate deaminase of Halothermothrix orenii (strain H 168 / OCM 544 / DSM 9562).